A 750-amino-acid polypeptide reads, in one-letter code: Elastin (750 aa).

A signal peptide spans 1–24 (ARQAAAPLLPGVLLLFSILPASQQ). P32, P67, P102, P176, P189, P192, and P211 each carry 4-hydroxyproline. Copy 1 of the repeat occupies 83 to 127 (GAGVGGLGAGLGAFPGAAFPGAASAAALKAAAKAGAGLGGVGGIG). The tract at residues 83–686 (GAGVGGLGAG…GVGGLGVGGL (604 aa)) is 8 X tandem repeats. A run of 7 repeats spans residues 219–262 (VNGL…AGVL), 263–318 (PGAG…GVPG), 319–393 (VVPG…VPGV), 394–482 (PGVP…VPGV), 483–554 (GVPG…VGGL), 555–619 (VPGV…PGVT), and 620–686 (PGVG…VGGL). A 4-hydroxyproline mark is found at P276, P345, P363, P368, P441, P455, and P480. 4-hydroxyproline occurs at positions 576, 635, and 720. A disulfide bridge links C739 with C745.

Belongs to the elastin family. The polymeric elastin chains are cross-linked together into an extensible 3D network. Elastin is formed through the cross-linking of its soluble precursor tropoelastin. Cross-linking is initiated through the action of lysyl oxidase on exposed lysines to form allysine. Subsequent spontaneous condensation reactions with other allysine or unmodified lysine residues result in various bi-, tri-, and tetrafunctional cross-links. The most abundant cross-links in mature elastin fibers are lysinonorleucine, allysine aldol, desmosine, and isodesmosine. In terms of processing, hydroxylated on proline residues. Post-translationally, hydroxylation on proline residues within the sequence motif, GXPG, is most likely to be 4-hydroxy as this fits the requirement for 4-hydroxylation in vertebrates.

The protein resides in the secreted. It localises to the extracellular space. Its subcellular location is the extracellular matrix. Functionally, major structural protein of tissues such as aorta and nuchal ligament, which must expand rapidly and recover completely. This chain is Elastin (ELN), found in Gallus gallus (Chicken).